Consider the following 87-residue polypeptide: Small ribosomal subunit protein bS20 (87 aa).

Positions 1–26 (MANTAQAKKRVRQNIKQRERNSGLRS) are disordered.

Belongs to the bacterial ribosomal protein bS20 family.

Binds directly to 16S ribosomal RNA. In Nitrosomonas eutropha (strain DSM 101675 / C91 / Nm57), this protein is Small ribosomal subunit protein bS20.